Consider the following 398-residue polypeptide: Exodeoxyribonuclease 7 large subunit (398 aa).

Belongs to the XseA family. In terms of assembly, heterooligomer composed of large and small subunits.

Its subcellular location is the cytoplasm. It catalyses the reaction Exonucleolytic cleavage in either 5'- to 3'- or 3'- to 5'-direction to yield nucleoside 5'-phosphates.. Its function is as follows. Bidirectionally degrades single-stranded DNA into large acid-insoluble oligonucleotides, which are then degraded further into small acid-soluble oligonucleotides. This is Exodeoxyribonuclease 7 large subunit from Salinibacter ruber (strain DSM 13855 / M31).